We begin with the raw amino-acid sequence, 418 residues long: Tyrosine--tRNA ligase (418 aa).

Tyr34 contributes to the L-tyrosine binding site. The short motif at 39–48 (PTADSLHLGH) is the 'HIGH' region element. L-tyrosine contacts are provided by Tyr169 and Gln173. The 'KMSKS' region motif lies at 229-233 (KFGKS). Residue Lys232 participates in ATP binding. One can recognise an S4 RNA-binding domain in the interval 352–418 (LNLVDMLVTA…GKKKYAVLTY (67 aa)).

This sequence belongs to the class-I aminoacyl-tRNA synthetase family. TyrS type 1 subfamily. Homodimer.

The protein resides in the cytoplasm. It carries out the reaction tRNA(Tyr) + L-tyrosine + ATP = L-tyrosyl-tRNA(Tyr) + AMP + diphosphate + H(+). Its function is as follows. Catalyzes the attachment of tyrosine to tRNA(Tyr) in a two-step reaction: tyrosine is first activated by ATP to form Tyr-AMP and then transferred to the acceptor end of tRNA(Tyr). In Streptococcus pyogenes serotype M6 (strain ATCC BAA-946 / MGAS10394), this protein is Tyrosine--tRNA ligase.